We begin with the raw amino-acid sequence, 208 residues long: Holliday junction branch migration complex subunit RuvA (208 aa).

The segment at 1-63 is domain I; that stretch reads MIGMLTGRVE…QDAITLHGFL (63 aa). Positions 64–142 are domain II; that stretch reads DRDAKKTFLQ…LSQIEGASAQ (79 aa). Residues 143-151 are flexible linker; that stretch reads AATSKSPVD. Residues 151–208 are domain III; that stretch reads DTGTEQVVEGLISLGWRQQDAQQAVAEACAENDIPTPLATDDVPRVLRLALALMDRGR.

This sequence belongs to the RuvA family. As to quaternary structure, homotetramer. Forms an RuvA(8)-RuvB(12)-Holliday junction (HJ) complex. HJ DNA is sandwiched between 2 RuvA tetramers; dsDNA enters through RuvA and exits via RuvB. An RuvB hexamer assembles on each DNA strand where it exits the tetramer. Each RuvB hexamer is contacted by two RuvA subunits (via domain III) on 2 adjacent RuvB subunits; this complex drives branch migration. In the full resolvosome a probable DNA-RuvA(4)-RuvB(12)-RuvC(2) complex forms which resolves the HJ.

It localises to the cytoplasm. In terms of biological role, the RuvA-RuvB-RuvC complex processes Holliday junction (HJ) DNA during genetic recombination and DNA repair, while the RuvA-RuvB complex plays an important role in the rescue of blocked DNA replication forks via replication fork reversal (RFR). RuvA specifically binds to HJ cruciform DNA, conferring on it an open structure. The RuvB hexamer acts as an ATP-dependent pump, pulling dsDNA into and through the RuvAB complex. HJ branch migration allows RuvC to scan DNA until it finds its consensus sequence, where it cleaves and resolves the cruciform DNA. This chain is Holliday junction branch migration complex subunit RuvA, found in Bifidobacterium longum (strain DJO10A).